The chain runs to 209 residues: Putative NAD(P)H nitroreductase YdgI (209 aa).

FMN is bound by residues 14 to 16, 72 to 74, 161 to 162, and Arg-199; these read RRS, QTQ, and GG.

The protein belongs to the nitroreductase family. It depends on FMN as a cofactor.

This Bacillus subtilis (strain 168) protein is Putative NAD(P)H nitroreductase YdgI (ydgI).